The following is a 132-amino-acid chain: Agouti-signaling protein (132 aa).

A signal peptide spans 1–22 (MDVTRLLLATLLVFLCFFTACS). N-linked (GlcNAc...) asparagine glycosylation occurs at Asn39. Residues 61–87 (QISRKEAEKKRSSKKEASMKKVARPRT) form a disordered region. Residues 63–79 (SRKEAEKKRSSKKEASM) are compositionally biased toward basic and acidic residues. 5 disulfide bridges follow: Cys93-Cys108, Cys100-Cys114, Cys107-Cys125, Cys111-Cys132, and Cys116-Cys123. One can recognise an Agouti domain in the interval 93–132 (CVATRDSCKPPAPACCDPCASCQCRFFRSACSCRVLSLNC).

The protein resides in the secreted. Its function is as follows. Involved in the regulation of melanogenesis. The binding of ASP to MC1R precludes alpha-MSH initiated signaling and thus blocks production of cAMP, leading to a down-regulation of eumelanogenesis (brown/black pigment) and thus increasing synthesis of pheomelanin (yellow/red pigment). The chain is Agouti-signaling protein (ASIP) from Macaca nigrescens (Gorontalo macaque).